An 842-amino-acid chain; its full sequence is Protein translocase subunit SecA (842 aa).

ATP contacts are provided by residues Q85, 103-107, and D493; that span reads GEGKT. Residues C825, C827, C836, and H837 each contribute to the Zn(2+) site.

The protein belongs to the SecA family. Monomer and homodimer. Part of the essential Sec protein translocation apparatus which comprises SecA, SecYEG and auxiliary proteins SecDF. Other proteins may also be involved. The cofactor is Zn(2+).

Its subcellular location is the cell membrane. It is found in the cytoplasm. It carries out the reaction ATP + H2O + cellular proteinSide 1 = ADP + phosphate + cellular proteinSide 2.. Its function is as follows. Part of the Sec protein translocase complex. Interacts with the SecYEG preprotein conducting channel. Has a central role in coupling the hydrolysis of ATP to the transfer of proteins into and across the cell membrane, serving as an ATP-driven molecular motor driving the stepwise translocation of polypeptide chains across the membrane. The sequence is that of Protein translocase subunit SecA from Streptococcus equi subsp. equi (strain 4047).